A 682-amino-acid polypeptide reads, in one-letter code: Potassium-transporting ATPase ATP-binding subunit (682 aa).

Helical transmembrane passes span 34-54, 58-78, 219-239, and 254-274; these read PVMF…LAMV, IAGS…TVLF, IALT…TATL, and VLVA…LSAI. The active-site 4-aspartylphosphate intermediate is D307. ATP is bound by residues D344, E348, 377–384, and K395; that span reads FTAQSRMS. Mg(2+)-binding residues include D518 and D522. 3 helical membrane-spanning segments follow: residues 588 to 608, 616 to 636, and 662 to 682; these read FAII…LNVM, AILS…PLAL, and LVVP…LGLA.

Belongs to the cation transport ATPase (P-type) (TC 3.A.3) family. Type IA subfamily. In terms of assembly, the system is composed of three essential subunits: KdpA, KdpB and KdpC.

It localises to the cell inner membrane. It catalyses the reaction K(+)(out) + ATP + H2O = K(+)(in) + ADP + phosphate + H(+). Functionally, part of the high-affinity ATP-driven potassium transport (or Kdp) system, which catalyzes the hydrolysis of ATP coupled with the electrogenic transport of potassium into the cytoplasm. This subunit is responsible for energy coupling to the transport system and for the release of the potassium ions to the cytoplasm. This Salmonella paratyphi B (strain ATCC BAA-1250 / SPB7) protein is Potassium-transporting ATPase ATP-binding subunit.